A 454-amino-acid chain; its full sequence is Guanine deaminase (454 aa).

Positions 82 and 84 each coordinate Zn(2+). Residues 84 to 87 (HASQ), 213 to 214 (RF), 240 to 243 (HISE), and Asp330 contribute to the substrate site. The Zn(2+) site is built by His240 and Asp330. Position 453 is a phosphoserine (Ser453).

It belongs to the metallo-dependent hydrolases superfamily. ATZ/TRZ family. As to quaternary structure, homodimer. Requires Zn(2+) as cofactor.

It catalyses the reaction guanine + H2O + H(+) = xanthine + NH4(+). It participates in purine metabolism; guanine degradation; xanthine from guanine: step 1/1. Its function is as follows. Catalyzes the hydrolytic deamination of guanine, producing xanthine and ammonia. The protein is Guanine deaminase (GDA) of Pongo abelii (Sumatran orangutan).